Here is a 378-residue protein sequence, read N- to C-terminus: Putative F-box protein At3g24580 (378 aa).

The region spanning 1–47 (MTKMSNLPNDLAEEVLSRVSLTSLRNVRLTCKDWNTLSKGESFAKNH) is the F-box domain.

This Arabidopsis thaliana (Mouse-ear cress) protein is Putative F-box protein At3g24580.